Here is a 267-residue protein sequence, read N- to C-terminus: Protein isy-1 (267 aa).

Positions 175–204 form a coiled coil; that stretch reads LEKLIEEKNIERINKEFAEKQAQKQQTASD. Positions 195–221 are disordered; it reads QAQKQQTASDAAPENIYKVEEDDDDDL.

The protein belongs to the ISY1 family. As to expression, ubiquitously expressed.

Its subcellular location is the nucleus. Regulates the processing of the mir-60 microRNA (miRNA), which in turn negatively regulates the expression of the transcription factor zip-10. Does not affect the splicing of zip-10. In Caenorhabditis elegans, this protein is Protein isy-1.